A 187-amino-acid chain; its full sequence is Ethylene-responsive transcription factor ERF015 (187 aa).

A DNA-binding region (AP2/ERF) is located at residues 26–83; that stretch reads CYRGVRKRSWGKWVSEIRVPKTGRRIWLGSYDAPEKAARAYDAALFCIRGEKGVYNFP.

This sequence belongs to the AP2/ERF transcription factor family. ERF subfamily.

It is found in the nucleus. Functionally, probably acts as a transcriptional activator. Binds to the GCC-box pathogenesis-related promoter element. May be involved in the regulation of gene expression by stress factors and by components of stress signal transduction pathways. The chain is Ethylene-responsive transcription factor ERF015 (ERF015) from Arabidopsis thaliana (Mouse-ear cress).